We begin with the raw amino-acid sequence, 149 residues long: Transcriptional repressor NrdR (149 aa).

A zinc finger lies at 3 to 34 (CPFCFAVDTKVIDSRLVGEGSSVRRRRQCLVC). The ATP-cone domain maps to 49-139 (PRVVKSNDVR…VYRSFEDIKE (91 aa)).

This sequence belongs to the NrdR family. Zn(2+) serves as cofactor.

Negatively regulates transcription of bacterial ribonucleotide reductase nrd genes and operons by binding to NrdR-boxes. The polypeptide is Transcriptional repressor NrdR (Shigella flexneri).